A 602-amino-acid chain; its full sequence is Leucine-rich repeat-containing protein 40 (602 aa).

The segment at 1-20 (MSRLKRIAGQDPRAGFKAAG) is disordered. Residue S71 is modified to Phosphoserine. 20 LRR repeats span residues 83–104 (DLTK…LRLL), 106–127 (ALTV…MREL), 129–150 (NLQK…ITNL), 152–173 (NLKC…FEQL), 175–196 (NLED…FSSL), 198–219 (SLVR…INRM), 221–242 (RLKH…LAGM), 244–265 (SLEL…PSCS), 266–286 (LLKE…EHLK), 290–311 (SILV…IILL), 313–335 (SLER…GNLH), 336–356 (LKFL…IINK), 400–421 (TLKI…VFNA), 426–447 (IITS…MVEL), 450–471 (MVSD…LCML), 473–494 (KLTF…MESL), 496–517 (RLQT…LYRI), 519–540 (TLET…KMKM), 543–564 (NLTT…LGNC), and 566–586 (NLRT…AILI).

This is Leucine-rich repeat-containing protein 40 (LRRC40) from Macaca fascicularis (Crab-eating macaque).